The chain runs to 95 residues: Co-chaperonin GroES (95 aa).

Belongs to the GroES chaperonin family. As to quaternary structure, heptamer of 7 subunits arranged in a ring. Interacts with the chaperonin GroEL.

The protein resides in the cytoplasm. Functionally, together with the chaperonin GroEL, plays an essential role in assisting protein folding. The GroEL-GroES system forms a nano-cage that allows encapsulation of the non-native substrate proteins and provides a physical environment optimized to promote and accelerate protein folding. GroES binds to the apical surface of the GroEL ring, thereby capping the opening of the GroEL channel. This Alkalilimnicola ehrlichii (strain ATCC BAA-1101 / DSM 17681 / MLHE-1) protein is Co-chaperonin GroES.